The primary structure comprises 1576 residues: Spermatogenesis-associated protein 31D1 (1576 aa).

The helical transmembrane segment at 29 to 49 (FICLSGLGLFILYLFYVVLTL) threads the bilayer. Disordered stretches follow at residues 170-197 (FTLASTPSATPPEDLILSPRPKASPPPP), 542-572 (HESPVLPPPQPLSLPSTQPLPLPQTLPQGQS), 782-801 (KDHLLHGPETSSDKDLRSNS), 952-1033 (SQGD…TDFQ), and 1293-1347 (RVSP…PPPE). Residues 546 to 565 (VLPPPQPLSLPSTQPLPLPQ) show a composition bias toward pro residues. Over residues 966–980 (RSTFQGEKLGTTSSV) the composition is skewed to polar residues. Residues 1004–1019 (QFSDTDHDLIETDSKD) are compositionally biased toward basic and acidic residues. The span at 1020-1032 (GASTSLRRGTTDF) shows a compositional bias: polar residues.

Belongs to the SPATA31 family.

The protein resides in the membrane. May play a role in spermatogenesis. The sequence is that of Spermatogenesis-associated protein 31D1 (SPATA31D1) from Homo sapiens (Human).